Reading from the N-terminus, the 156-residue chain is MSRRRRPEKRVILPDPKFGDQVLSKFMNNLMLDGKKSVAESIVYGALEVMQTRAKADPVQLFHDALNNVRPQIEVRSRRVGGATYQVPVEVRPERAQALAIRWLITAARNRSETTMAARLSAELLDAANNRGNAVKKREDTHRMADANRAFSHYRW.

This sequence belongs to the universal ribosomal protein uS7 family. In terms of assembly, part of the 30S ribosomal subunit. Contacts proteins S9 and S11.

Functionally, one of the primary rRNA binding proteins, it binds directly to 16S rRNA where it nucleates assembly of the head domain of the 30S subunit. Is located at the subunit interface close to the decoding center, probably blocks exit of the E-site tRNA. The sequence is that of Small ribosomal subunit protein uS7 from Novosphingobium aromaticivorans (strain ATCC 700278 / DSM 12444 / CCUG 56034 / CIP 105152 / NBRC 16084 / F199).